The primary structure comprises 364 residues: Inactive protein RESTRICTED TEV MOVEMENT 2 (364 aa).

The sHSP domain occupies 14 to 121 (VQYEDFVPKS…LPETSRTEAA (108 aa)). One copy of the A-1 repeat lies at 129–133 (LEEKR). A 6 X 5 AA repeats A of L-E-E-[SKR]-[ERK] region spans residues 129 to 220 (LEEKRLLEES…LEERRLEERK (92 aa)). Residues 135–139 (LEESR) form an A-2 repeat. The A-3 repeat unit spans residues 156 to 160 (LEEKE). The B-1 repeat unit spans residues 163-176 (IRKLQEEAKAKEEA). Residues 163 to 206 (IRKLQEEAKAKEEAEMRKLQEEAKAKEEAAAKKLQEEIEAKEKL) are 3 X 14 AA repeats B of [IMA]-[RK]-K-L-Q-E-E-A-K-A-K-E-[EK]-[LA]. A B-2 repeat occupies 178 to 191 (MRKLQEEAKAKEEA). The B-3 repeat unit spans residues 193-205 (AKKLQEEIEAKEK). The A-4 repeat unit spans residues 206–210 (LEERK). The stretch at 211–215 (LEERR) is one A-5 repeat. One copy of the A-6 repeat lies at 216–220 (LEERK). A helical membrane pass occupies residues 322 to 342 (LMMNVGVAALVIFALGAYVSY). A disordered region spans residues 345 to 364 (CSSSSSSSSPSSSSSSTKPE). The span at 346 to 364 (SSSSSSSSPSSSSSSTKPE) shows a compositional bias: low complexity.

Belongs to the small heat shock protein (HSP20) family.

It is found in the cell membrane. Seems to not be involved in heat resistance. Unable to mediate restriction of long-distance movement of the pathogenic tobacco etch virus (TEV) without causing a hypersensitive response or inducing systemic acquired resistance. In Arabidopsis thaliana (Mouse-ear cress), this protein is Inactive protein RESTRICTED TEV MOVEMENT 2 (RTM2).